Consider the following 839-residue polypeptide: Conserved oligomeric Golgi complex subunit 6 (839 aa).

Residues 14 to 38 (DTATPELPEPEPRLNLTSDAQSQPT) are disordered.

Belongs to the COG6 family. As to quaternary structure, component of the conserved oligomeric Golgi (COG or Sec34/Sec35) complex which consists of eight different proteins COG1-COG8.

The protein localises to the golgi apparatus membrane. In terms of biological role, acts as a component of the peripheral membrane COG complex that is involved in intra-Golgi protein trafficking. COG is located at the cis-Golgi, and regulates tethering of retrograde intra-Golgi vesicles and possibly a number of other membrane trafficking events. This chain is Conserved oligomeric Golgi complex subunit 6 (COG6), found in Saccharomyces cerevisiae (strain ATCC 204508 / S288c) (Baker's yeast).